We begin with the raw amino-acid sequence, 130 residues long: Histone H2A type 1-F (130 aa).

The tract at residues 1–22 (MSGRGKQGGKARAKAKTRSSRA) is disordered. Ser2 carries the post-translational modification Phosphoserine; by RPS6KA5. Arg4 is subject to Citrulline; alternate. A Symmetric dimethylarginine; by PRMT5; alternate modification is found at Arg4. Lys6 is subject to N6-(2-hydroxyisobutyryl)lysine; alternate. Lys6 is subject to N6-(beta-hydroxybutyryl)lysine; alternate. Basic residues predominate over residues 7–19 (QGGKARAKAKTRS). Lys10 carries the post-translational modification N6-(2-hydroxyisobutyryl)lysine. Lys10 carries the post-translational modification N6-lactoyllysine; alternate. N6-(2-hydroxyisobutyryl)lysine; alternate is present on Lys37. Lys37 bears the N6-(beta-hydroxybutyryl)lysine; alternate mark. N6-crotonyllysine; alternate is present on Lys37. 3 positions are modified to N6-(2-hydroxyisobutyryl)lysine: Lys75, Lys76, and Lys96. Lys96 carries the post-translational modification N6-glutaryllysine; alternate. At Gln105 the chain carries N5-methylglutamine. N6-(2-hydroxyisobutyryl)lysine; alternate is present on Lys119. 2 positions are modified to N6-crotonyllysine; alternate: Lys119 and Lys120. An N6-glutaryllysine; alternate mark is found at Lys119 and Lys120. Lys120 bears the N6-(beta-hydroxybutyryl)lysine; alternate mark. A Glycyl lysine isopeptide (Lys-Gly) (interchain with G-Cter in ubiquitin); alternate cross-link involves residue Lys120. At Thr121 the chain carries Phosphothreonine; by DCAF1. At Lys126 the chain carries N6-(beta-hydroxybutyryl)lysine; alternate. Lys126 carries the post-translational modification N6-crotonyllysine; alternate. The residue at position 126 (Lys126) is an N6-glutaryllysine; alternate.

It belongs to the histone H2A family. In terms of assembly, the nucleosome is a histone octamer containing two molecules each of H2A, H2B, H3 and H4 assembled in one H3-H4 heterotetramer and two H2A-H2B heterodimers. The octamer wraps approximately 147 bp of DNA. Deiminated on Arg-4 in granulocytes upon calcium entry. Post-translationally, monoubiquitination of Lys-120 (H2AK119Ub) by RING1, TRIM37 and RNF2/RING2 complex gives a specific tag for epigenetic transcriptional repression and participates in X chromosome inactivation of female mammals. It is involved in the initiation of both imprinted and random X inactivation. Ubiquitinated H2A is enriched in inactive X chromosome chromatin. Ubiquitination of H2A functions downstream of methylation of 'Lys-27' of histone H3 (H3K27me). H2AK119Ub by RNF2/RING2 can also be induced by ultraviolet and may be involved in DNA repair. Following DNA double-strand breaks (DSBs), it is ubiquitinated through 'Lys-63' linkage of ubiquitin moieties by the E2 ligase UBE2N and the E3 ligases RNF8 and RNF168, leading to the recruitment of repair proteins to sites of DNA damage. Ubiquitination at Lys-14 and Lys-16 (H2AK13Ub and H2AK15Ub, respectively) in response to DNA damage is initiated by RNF168 that mediates monoubiquitination at these 2 sites, and 'Lys-63'-linked ubiquitin are then conjugated to monoubiquitin; RNF8 is able to extend 'Lys-63'-linked ubiquitin chains in vitro. H2AK119Ub and ionizing radiation-induced 'Lys-63'-linked ubiquitination (H2AK13Ub and H2AK15Ub) are distinct events. In terms of processing, phosphorylation on Ser-2 (H2AS1ph) is enhanced during mitosis. Phosphorylation on Ser-2 by RPS6KA5/MSK1 directly represses transcription. Acetylation of H3 inhibits Ser-2 phosphorylation by RPS6KA5/MSK1. Phosphorylation at Thr-121 (H2AT120ph) by DCAF1 is present in the regulatory region of many tumor suppresor genes and down-regulates their transcription. Symmetric dimethylation on Arg-4 by the PRDM1/PRMT5 complex may play a crucial role in the germ-cell lineage. Post-translationally, glutamine methylation at Gln-105 (H2AQ104me) by FBL is specifically dedicated to polymerase I. It is present at 35S ribosomal DNA locus and impairs binding of the FACT complex. In terms of processing, crotonylation (Kcr) is specifically present in male germ cells and marks testis-specific genes in post-meiotic cells, including X-linked genes that escape sex chromosome inactivation in haploid cells. Crotonylation marks active promoters and enhancers and confers resistance to transcriptional repressors. It is also associated with post-meiotically activated genes on autosomes. Hydroxybutyrylation of histones is induced by starvation. Post-translationally, lactylated in macrophages by EP300/P300 by using lactoyl-CoA directly derived from endogenous or exogenous lactate, leading to stimulates gene transcription.

The protein localises to the nucleus. It localises to the chromosome. Functionally, core component of nucleosome. Nucleosomes wrap and compact DNA into chromatin, limiting DNA accessibility to the cellular machineries which require DNA as a template. Histones thereby play a central role in transcription regulation, DNA repair, DNA replication and chromosomal stability. DNA accessibility is regulated via a complex set of post-translational modifications of histones, also called histone code, and nucleosome remodeling. The sequence is that of Histone H2A type 1-F (Hist1h2af) from Mus musculus (Mouse).